The chain runs to 809 residues: Leucine--tRNA ligase (809 aa).

Residues 40 to 50 (PYPSGRIHMGH) carry the 'HIGH' region motif. The 'KMSKS' region motif lies at 579-583 (KMSKS). Position 582 (K582) interacts with ATP.

The protein belongs to the class-I aminoacyl-tRNA synthetase family.

The protein resides in the cytoplasm. The catalysed reaction is tRNA(Leu) + L-leucine + ATP = L-leucyl-tRNA(Leu) + AMP + diphosphate. The chain is Leucine--tRNA ligase from Campylobacter jejuni subsp. doylei (strain ATCC BAA-1458 / RM4099 / 269.97).